Here is a 464-residue protein sequence, read N- to C-terminus: Plant intracellular Ras-group-related LRR protein 3 (464 aa).

Residues 106-138 (AAVVSLEEVHEGYEKQLRDLEEEIGRVYASAVE) are a coiled coil. LRR repeat units follow at residues 160 to 183 (GGVVERIDLSDHELKLLPDALGKI), 184 to 206 (VGLVSLNVSRNNLRFLPDTISGL), 207 to 230 (EKLEELDLSSNRLVFLPDSIGLLL), 232 to 252 (LRILNVTGNKLTLLPESIAQC), 254 to 275 (SLVELDASFNNLTSLPANFGYG), 276 to 299 (LLNLERLSIQLNKIRFFPNSICEM), 301 to 322 (SLRYLDAHMNEIHGLPIAIGRL), 323 to 347 (TNLEVMNLSSNFSDLIELPDTISDL), 348 to 370 (ANLRELDLSNNQIRVLPDSFFRL), and 372 to 393 (KLEKLNLDQNPLEYPPQEMVNQ). Positions 398–406 (VREFMRKRW) match the GVYW; degenerate motif.

It belongs to the SHOC2 family. In terms of tissue distribution, widely expressed.

Functionally, leucine-rich repeat protein that likely mediates protein interactions, possibly in the context of signal transduction. The sequence is that of Plant intracellular Ras-group-related LRR protein 3 (PIRL3) from Arabidopsis thaliana (Mouse-ear cress).